Reading from the N-terminus, the 313-residue chain is Methionyl-tRNA formyltransferase (313 aa).

Position 113–116 (113–116 (SLLP)) interacts with (6S)-5,6,7,8-tetrahydrofolate.

The protein belongs to the Fmt family.

It carries out the reaction L-methionyl-tRNA(fMet) + (6R)-10-formyltetrahydrofolate = N-formyl-L-methionyl-tRNA(fMet) + (6S)-5,6,7,8-tetrahydrofolate + H(+). Its function is as follows. Attaches a formyl group to the free amino group of methionyl-tRNA(fMet). The formyl group appears to play a dual role in the initiator identity of N-formylmethionyl-tRNA by promoting its recognition by IF2 and preventing the misappropriation of this tRNA by the elongation apparatus. In Francisella tularensis subsp. tularensis (strain FSC 198), this protein is Methionyl-tRNA formyltransferase.